We begin with the raw amino-acid sequence, 1209 residues long: Phospholipid-transporting ATPase ID (1209 aa).

Over 1-68 (MTVPKEIPEK…NIVTFLPVNL (68 aa)) the chain is Cytoplasmic. A disordered region spans residues 12 to 36 (ARAGAPPSWSQKKPSWGTEEERRAR). The chain crosses the membrane as a helical span at residues 69 to 89 (FEQFQEVANTYFLFLLILQLI). At 90–91 (PQ) the chain is on the exoplasmic loop side. Residues 92-112 (ISSLSWFTTIVPLVLVLTITA) traverse the membrane as a helical segment. The Cytoplasmic segment spans residues 113–295 (VKDATDDYFR…TSIDRLMNTL (183 aa)). Residues 296-316 (VLWIFGFLVCMGVILAIGNAI) traverse the membrane as a helical segment. The Exoplasmic loop portion of the chain corresponds to 317 to 338 (WEHEVGTRFQVYLPWDEAVDSA). Residues 339–359 (FFSGFLSFWSYIIILNTVVPI) traverse the membrane as a helical segment. At 360-898 (SLYVSVEVIR…KFLCYFFYKN (539 aa)) the chain is on the cytoplasmic side. The active-site 4-aspartylphosphate intermediate is the D411. ATP-binding residues include D411, K412, T413, E515, F556, K579, R613, T693, G694, D695, R807, and K813. D411 serves as a coordination point for Mg(2+). A Mg(2+)-binding site is contributed by T413. Mg(2+) is bound at residue D833. Residues N836 and D837 each contribute to the ATP site. D837 serves as a coordination point for Mg(2+). A helical membrane pass occupies residues 899-919 (FAFTMVHFWFGFFCGFSAQTV). Residues 920–922 (YDQ) are Exoplasmic loop-facing. Residues 923 to 943 (YFITLYNIVYTSLPVLAMGVF) traverse the membrane as a helical segment. At 944–972 (DQDVPEQRSMEYPKLYEPGQLNLLFNKRE) the chain is on the cytoplasmic side. The helical transmembrane segment at 973–993 (FFICIAQGIYTSVLMFFIPYG) threads the bilayer. Over 994–1011 (VFAEATRDDGTQLADYQS) the chain is Exoplasmic loop. Residues 1012–1032 (FAVTVATSLVIVVSVQIGLDT) traverse the membrane as a helical segment. Residues 1033-1036 (GYWT) lie on the Cytoplasmic side of the membrane. A helical transmembrane segment spans residues 1037–1057 (AINHFFIWGSLAVYFAILFAM). Residues 1058–1082 (HSNGLFDMFPNQFRFVGNAQNTLAQ) are Exoplasmic loop-facing. A helical membrane pass occupies residues 1083 to 1103 (PTVWLTIALTTAVCIMPVVAF). Residues 1104 to 1209 (RFLRLSLKPD…SGGAEKPLKG (106 aa)) are Cytoplasmic-facing. S1175 is subject to Phosphoserine. A disordered region spans residues 1179-1209 (RSSSSWIESLRRKKSDSANSPSGGAEKPLKG).

The protein belongs to the cation transport ATPase (P-type) (TC 3.A.3) family. Type IV subfamily. In terms of assembly, component of a P4-ATPase flippase complex which consists of a catalytic alpha subunit ATP8B2 and an accessory beta subunit TMEM30A or TMEM30B. Requires Mg(2+) as cofactor. Expressed in brain and testes (at protein level).

It is found in the cell membrane. It localises to the endoplasmic reticulum membrane. It catalyses the reaction ATP + H2O + phospholipidSide 1 = ADP + phosphate + phospholipidSide 2.. The enzyme catalyses a 1,2-diacyl-sn-glycero-3-phosphocholine(out) + ATP + H2O = a 1,2-diacyl-sn-glycero-3-phosphocholine(in) + ADP + phosphate + H(+). Functionally, catalytic component of P4-ATPase flippase complex, which catalyzes the hydrolysis of ATP coupled to the transport of phosphatidylcholine (PC) from the outer to the inner leaflet of the plasma membrane. May contribute to the maintenance of membrane lipid asymmetry. This chain is Phospholipid-transporting ATPase ID, found in Mus musculus (Mouse).